The chain runs to 219 residues: Asperlin biosynthesis cluster protein I (219 aa).

Residues 97–124 (TGSSDNSPTATGIGAAGLTGDRPSSSGA) are disordered. Low complexity predominate over residues 105–116 (TATGIGAAGLTG).

The protein operates within polyketide biosynthesis. Its function is as follows. Part of the gene cluster that mediates the biosynthesis of asperlin, a polyketide showing anti-inflammatory, antitumor and antibiotic activities. The first step of the asperlin biosynthesis is the production of the intermediate 2,4,6-octatrienoic acid by the highly redusing polyketide synthase alnA with cleavage of the PKS product by the esterase alnB. 2,4,6-octatrienoic acid is further converted to asperlin via several steps involving the remaining enzymes from the cluster. The sequence is that of Asperlin biosynthesis cluster protein I from Emericella nidulans (strain FGSC A4 / ATCC 38163 / CBS 112.46 / NRRL 194 / M139) (Aspergillus nidulans).